The sequence spans 182 residues: Ribulose bisphosphate carboxylase small subunit, chloroplastic 6 (182 aa).

A chloroplast-targeting transit peptide spans 1–41 (MAATMMSKTIISSKQCSKPIAPPKVSINKGFVNTSAAIKNR).

This sequence belongs to the RuBisCO small chain family. In terms of assembly, heterohexadecamer of 8 large and 8 small subunits.

The protein localises to the plastid. It localises to the chloroplast. Its function is as follows. RuBisCO catalyzes two reactions: the carboxylation of D-ribulose 1,5-bisphosphate, the primary event in carbon dioxide fixation, as well as the oxidative fragmentation of the pentose substrate. Both reactions occur simultaneously and in competition at the same active site. Although the small subunit is not catalytic it is essential for maximal activity. The protein is Ribulose bisphosphate carboxylase small subunit, chloroplastic 6 of Acetabularia peniculus (Green alga).